The sequence spans 185 residues: Elongation factor P (185 aa).

The protein belongs to the elongation factor P family.

It localises to the cytoplasm. Its pathway is protein biosynthesis; polypeptide chain elongation. Its function is as follows. Involved in peptide bond synthesis. Stimulates efficient translation and peptide-bond synthesis on native or reconstituted 70S ribosomes in vitro. Probably functions indirectly by altering the affinity of the ribosome for aminoacyl-tRNA, thus increasing their reactivity as acceptors for peptidyl transferase. The chain is Elongation factor P from Halalkalibacterium halodurans (strain ATCC BAA-125 / DSM 18197 / FERM 7344 / JCM 9153 / C-125) (Bacillus halodurans).